A 105-amino-acid chain; its full sequence is Large ribosomal subunit protein eL30 (105 aa).

This sequence belongs to the eukaryotic ribosomal protein eL30 family.

The sequence is that of Large ribosomal subunit protein eL30 (RPL30) from Trypanosoma brucei brucei.